The chain runs to 489 residues: Beta-1,3-glucosyltransferase (489 aa).

Position 1 (Met-1) is a topological domain, cytoplasmic. A helical; Signal-anchor for type II membrane protein transmembrane segment spans residues 2–22 (RPPALLALFSCSAAFALMSEE). The Lumenal segment spans residues 23–489 (IKEKVTPSQD…ETQKDPREEL (467 aa)). N-linked (GlcNAc...) asparagine glycosylation is present at Asn-78. The short motif at 486-489 (REEL) is the Prevents secretion from ER element.

Belongs to the glycosyltransferase 31 family.

It localises to the endoplasmic reticulum membrane. It functions in the pathway protein modification; protein glycosylation. Functionally, O-glucosyltransferase that transfers glucose toward fucose with a beta-1,3 linkage. Specifically glucosylates O-linked fucosylglycan on TSP type-1 domains of proteins, thereby contributing to elongation of O-fucosylglycan. This chain is Beta-1,3-glucosyltransferase, found in Mus musculus (Mouse).